A 186-amino-acid chain; its full sequence is Protein MTH_152 (186 aa).

Belongs to the flavoredoxin family. Homodimer. The cofactor is FMN.

This is Protein MTH_152 from Methanothermobacter thermautotrophicus (strain ATCC 29096 / DSM 1053 / JCM 10044 / NBRC 100330 / Delta H) (Methanobacterium thermoautotrophicum).